The chain runs to 73 residues: UPF0235 protein PCC7424_0673 (73 aa).

This sequence belongs to the UPF0235 family.

This chain is UPF0235 protein PCC7424_0673, found in Gloeothece citriformis (strain PCC 7424) (Cyanothece sp. (strain PCC 7424)).